Consider the following 142-residue polypeptide: UPF0305 protein MK0666 (142 aa).

Belongs to the UPF0305 family.

The polypeptide is UPF0305 protein MK0666 (Methanopyrus kandleri (strain AV19 / DSM 6324 / JCM 9639 / NBRC 100938)).